The following is a 153-amino-acid chain: Endoribonuclease YbeY (153 aa).

The Zn(2+) site is built by histidine 113, histidine 117, and histidine 123.

This sequence belongs to the endoribonuclease YbeY family. Zn(2+) serves as cofactor.

It localises to the cytoplasm. Functionally, single strand-specific metallo-endoribonuclease involved in late-stage 70S ribosome quality control and in maturation of the 3' terminus of the 16S rRNA. This is Endoribonuclease YbeY from Aliivibrio salmonicida (strain LFI1238) (Vibrio salmonicida (strain LFI1238)).